Consider the following 259-residue polypeptide: UPF0246 protein ABBFA_001173 (259 aa).

This sequence belongs to the UPF0246 family.

The polypeptide is UPF0246 protein ABBFA_001173 (Acinetobacter baumannii (strain AB307-0294)).